The primary structure comprises 251 residues: Triosephosphate isomerase (251 aa).

N9–K11 lines the substrate pocket. The Electrophile role is filled by H95. The active-site Proton acceptor is the E167. Residues G173, S213, and G234–G235 each bind substrate.

It belongs to the triosephosphate isomerase family. In terms of assembly, homodimer.

It localises to the cytoplasm. It catalyses the reaction D-glyceraldehyde 3-phosphate = dihydroxyacetone phosphate. Its pathway is carbohydrate biosynthesis; gluconeogenesis. It participates in carbohydrate degradation; glycolysis; D-glyceraldehyde 3-phosphate from glycerone phosphate: step 1/1. Involved in the gluconeogenesis. Catalyzes stereospecifically the conversion of dihydroxyacetone phosphate (DHAP) to D-glyceraldehyde-3-phosphate (G3P). This Latilactobacillus sakei subsp. sakei (strain 23K) (Lactobacillus sakei subsp. sakei) protein is Triosephosphate isomerase.